A 124-amino-acid polypeptide reads, in one-letter code: Small ribosomal subunit protein uS12 (124 aa).

Aspartate 89 carries the post-translational modification 3-methylthioaspartic acid.

Belongs to the universal ribosomal protein uS12 family. Part of the 30S ribosomal subunit. Contacts proteins S8 and S17. May interact with IF1 in the 30S initiation complex.

With S4 and S5 plays an important role in translational accuracy. Its function is as follows. Interacts with and stabilizes bases of the 16S rRNA that are involved in tRNA selection in the A site and with the mRNA backbone. Located at the interface of the 30S and 50S subunits, it traverses the body of the 30S subunit contacting proteins on the other side and probably holding the rRNA structure together. The combined cluster of proteins S8, S12 and S17 appears to hold together the shoulder and platform of the 30S subunit. This Baumannia cicadellinicola subsp. Homalodisca coagulata protein is Small ribosomal subunit protein uS12.